A 182-amino-acid polypeptide reads, in one-letter code: Acireductone dioxygenase (182 aa).

Residues histidine 100, histidine 102, glutamate 106, and histidine 145 each coordinate Fe(2+). Residues histidine 100, histidine 102, glutamate 106, and histidine 145 each contribute to the Ni(2+) site.

This sequence belongs to the acireductone dioxygenase (ARD) family. Monomer. Requires Fe(2+) as cofactor. Ni(2+) serves as cofactor.

It carries out the reaction 1,2-dihydroxy-5-(methylsulfanyl)pent-1-en-3-one + O2 = 3-(methylsulfanyl)propanoate + CO + formate + 2 H(+). It catalyses the reaction 1,2-dihydroxy-5-(methylsulfanyl)pent-1-en-3-one + O2 = 4-methylsulfanyl-2-oxobutanoate + formate + 2 H(+). The protein operates within amino-acid biosynthesis; L-methionine biosynthesis via salvage pathway; L-methionine from S-methyl-5-thio-alpha-D-ribose 1-phosphate: step 5/6. In terms of biological role, catalyzes 2 different reactions between oxygen and the acireductone 1,2-dihydroxy-3-keto-5-methylthiopentene (DHK-MTPene) depending upon the metal bound in the active site. Fe-containing acireductone dioxygenase (Fe-ARD) produces formate and 2-keto-4-methylthiobutyrate (KMTB), the alpha-ketoacid precursor of methionine in the methionine recycle pathway. Ni-containing acireductone dioxygenase (Ni-ARD) produces methylthiopropionate, carbon monoxide and formate, and does not lie on the methionine recycle pathway. This chain is Acireductone dioxygenase, found in Trichormus variabilis (strain ATCC 29413 / PCC 7937) (Anabaena variabilis).